A 456-amino-acid chain; its full sequence is Probable serine/threonine-protein kinase DDB_G0277449 (456 aa).

The segment covering 50–83 (STSPTECEESSSSTITTPSEESLSSGEESSSISD) has biased composition (low complexity). A disordered region spans residues 50–84 (STSPTECEESSSSTITTPSEESLSSGEESSSISDS). Residues 128 to 383 (FIIKHLVGKG…AIEIKRHPFF (256 aa)) form the Protein kinase domain. ATP contacts are provided by residues 134–142 (VGKGGFGKV) and Lys-157. Asp-251 functions as the Proton acceptor in the catalytic mechanism. Positions 384–455 (KSIQWRKIEN…VRTPVLLESQ (72 aa)) constitute an AGC-kinase C-terminal domain.

This sequence belongs to the protein kinase superfamily. AGC Ser/Thr protein kinase family.

It carries out the reaction L-seryl-[protein] + ATP = O-phospho-L-seryl-[protein] + ADP + H(+). The catalysed reaction is L-threonyl-[protein] + ATP = O-phospho-L-threonyl-[protein] + ADP + H(+). In Dictyostelium discoideum (Social amoeba), this protein is Probable serine/threonine-protein kinase DDB_G0277449.